The primary structure comprises 90 residues: uncharacterized protein (90 aa).

The signal sequence occupies residues 1-26 (MFESEAELRRIRIALVWIAVFLLFGA).

This is an uncharacterized protein from Bacillus subtilis (strain 168).